The chain runs to 514 residues: Pantetheinase (514 aa).

A signal peptide spans 1–22 (MITSRLLVYVAVLVLCVIKVSS). A glycan (N-linked (GlcNAc...) asparagine) is linked at N39. Residues 40-307 (ATLVPVSHEE…GKLLLSQLDS (268 aa)) enclose the CN hydrolase domain. E80 serves as the catalytic Proton acceptor. Residues N87 and N147 are each glycosylated (N-linked (GlcNAc...) asparagine). K179 acts as the Proton donor in catalysis. The active-site Nucleophile is the C212. Residues N316 and N354 are each glycosylated (N-linked (GlcNAc...) asparagine). D492 is lipidated: GPI-anchor amidated aspartate. Positions 493-514 (PRSQVPGVMLLVIIPIVCSLSW) are cleaved as a propeptide — removed in mature form.

Belongs to the carbon-nitrogen hydrolase superfamily. BTD/VNN family. Monomer.

Its subcellular location is the cell membrane. It catalyses the reaction (R)-pantetheine + H2O = cysteamine + (R)-pantothenate. Functionally, amidohydrolase that hydrolyzes specifically one of the carboamide linkages in D-pantetheine thus recycling pantothenic acid (vitamin B5) and releasing cysteamine. In Canis lupus familiaris (Dog), this protein is Pantetheinase (VNN1).